Reading from the N-terminus, the 195-residue chain is Probable GTP-binding protein EngB (195 aa).

An EngB-type G domain is found at E24–L195. GTP-binding positions include G32–S39, G59–L63, D77–G80, T144–D147, and F176–S178. Residues S39 and T61 each contribute to the Mg(2+) site.

This sequence belongs to the TRAFAC class TrmE-Era-EngA-EngB-Septin-like GTPase superfamily. EngB GTPase family. Mg(2+) serves as cofactor.

In terms of biological role, necessary for normal cell division and for the maintenance of normal septation. This is Probable GTP-binding protein EngB from Streptococcus pneumoniae (strain Hungary19A-6).